Consider the following 253-residue polypeptide: Uracil-DNA glycosylase (253 aa).

The Proton acceptor role is filled by D79.

The protein belongs to the uracil-DNA glycosylase (UDG) superfamily. UNG family.

Its subcellular location is the cytoplasm. It carries out the reaction Hydrolyzes single-stranded DNA or mismatched double-stranded DNA and polynucleotides, releasing free uracil.. In terms of biological role, excises uracil residues from the DNA which can arise as a result of misincorporation of dUMP residues by DNA polymerase or due to deamination of cytosine. This is Uracil-DNA glycosylase from Xylella fastidiosa (strain M12).